The sequence spans 281 residues: Probable endonuclease 4 (281 aa).

Zn(2+) contacts are provided by H69, H109, E145, D179, H182, H216, D229, H231, and E261.

The protein belongs to the AP endonuclease 2 family. Zn(2+) serves as cofactor.

The catalysed reaction is Endonucleolytic cleavage to 5'-phosphooligonucleotide end-products.. Its function is as follows. Endonuclease IV plays a role in DNA repair. It cleaves phosphodiester bonds at apurinic or apyrimidinic (AP) sites, generating a 3'-hydroxyl group and a 5'-terminal sugar phosphate. This Parabacteroides distasonis (strain ATCC 8503 / DSM 20701 / CIP 104284 / JCM 5825 / NCTC 11152) protein is Probable endonuclease 4.